We begin with the raw amino-acid sequence, 911 residues long: Protein transport protein SEC24-1 (911 aa).

The span at 108–123 (QPLPQQQQQQQQQQGP) shows a compositional bias: low complexity. Residues 108 to 130 (QPLPQQQQQQQQQQGPAKPPKPM) are disordered. Zn(2+)-binding residues include Cys-226, Cys-229, Cys-248, and Cys-251. The tract at residues 226–251 (CRRCRSYMNPFVHFNQDGRRWKCNIC) is zinc finger-like.

The protein belongs to the SEC23/SEC24 family. SEC24 subfamily. In terms of assembly, the COPII coat is composed of at least 5 proteins: the SEC23/24 complex, the SEC13/31 complex, and the protein SAR1. Golgi apparatus membrane; Peripheral membrane protein; Cytoplasmic side.

It is found in the cytoplasm. The protein localises to the cytoplasmic vesicle. The protein resides in the COPII-coated vesicle membrane. It localises to the endoplasmic reticulum membrane. Its subcellular location is the golgi apparatus membrane. Functionally, component of the coat protein complex II (COPII) which promotes the formation of transport vesicles from the endoplasmic reticulum (ER). The coat has two main functions, the physical deformation of the endoplasmic reticulum membrane into vesicles and the selection of cargo molecules. The chain is Protein transport protein SEC24-1 (SEC241) from Naumovozyma castellii (Yeast).